The sequence spans 73 residues: Conotoxin Im14.3 (73 aa).

The signal sequence occupies residues 1-17 (MGVFRCCLAAALVVVCL). A propeptide spanning residues 18–35 (SRMGGTEPLESNHEDERR) is cleaved from the precursor. Residues 22–42 (GTEPLESNHEDERRADDTSGD) are disordered. Over residues 27-38 (ESNHEDERRADD) the composition is skewed to basic and acidic residues. The 30-residue stretch at 44 to 73 (CVDTNEDCVNWASTGQCEANPSYMRENCRK) folds into the ShKT domain.

In terms of processing, contain 2 disulfide bonds. In terms of tissue distribution, expressed by the venom duct.

It is found in the secreted. Functionally, probable neurotoxin. The protein is Conotoxin Im14.3 of Conus imperialis (Imperial cone).